The following is a 60-amino-acid chain: U-actitoxin-Avd12b (60 aa).

The first 6 residues, 1–6 (SKEGMS), serve as a signal peptide directing secretion. Residues 7–12 (YEEPEN) constitute a propeptide that is removed on maturation. In terms of domain architecture, EGF-like spans 14-56 (EGVACTGQYAESFCLNGGTCRYIQSIGEYYCICVGDYTGHRCE). 3 disulfides stabilise this stretch: Cys-18/Cys-33, Cys-27/Cys-44, and Cys-46/Cys-55.

The protein belongs to the EGF domain peptide family.

The protein localises to the secreted. Its subcellular location is the nematocyst. In terms of biological role, has both toxic and EGF activity. Its EGF activity consists of rounding cells (morphological change) and inducing tyrosine phosphorylation of the EGFR in A431 cells, but with a lower potency that human EGF. The chain is U-actitoxin-Avd12b from Anemonia viridis (Snakelocks anemone).